The following is a 568-amino-acid chain: TWiK family of potassium channels protein 9 (568 aa).

Residues 1–15 (MKCSFHIPEKYQWAS) are Cytoplasmic-facing. Residues 16–36 (TLFVHVALIAGVAVYTVFGAL) traverse the membrane as a helical segment. The pore-forming intramembrane region spans 163–183 (IGNSVIFAFTVITTIGYGHVA). A helical transmembrane segment spans residues 191–211 (LFLIFYGVIGVPFTLLTIADL). The Cytoplasmic portion of the chain corresponds to 212-316 (GMFLTRFLKN…NNEPRKTEES (105 aa)). Disordered regions lie at residues 243 to 262 (QRNK…RSEV) and 274 to 314 (MRTA…RKTE). Acidic residues predominate over residues 297-307 (GKEEDEEEPEN). The helical transmembrane segment at 317 to 337 (IALGITFTCYLVAGAKILSVY) threads the bilayer. The pore-forming intramembrane region spans 343–363 (FFKALYFNFVTLTTIGLGDFV). The helical transmembrane segment at 370–390 (LLITLIYIGIGLALTTMAIEI) threads the bilayer. Residues 391–568 (AADLLKKLHY…LRTYTNARRK (178 aa)) are Cytoplasmic-facing.

The protein belongs to the two pore domain potassium channel (TC 1.A.1.8) family. In terms of tissue distribution, expressed in ray A-type neurons and cell bodies. Also seen in head, pharyngeal and phasmid neurons, and in coelomocytes.

The protein localises to the membrane. Its function is as follows. Potassium channel protein that may be component of regulatory network that controls ray development and function. This Caenorhabditis elegans protein is TWiK family of potassium channels protein 9 (twk-9).